Consider the following 56-residue polypeptide: Large ribosomal subunit protein bL33c (56 aa).

It belongs to the bacterial ribosomal protein bL33 family.

It localises to the plastid. It is found in the chloroplast. The polypeptide is Large ribosomal subunit protein bL33c (rpl33) (Guillardia theta (Cryptophyte)).